The chain runs to 429 residues: Maltoporin 2 (429 aa).

A signal peptide spans 1-25 (MMITLRKLPLAVAVAAGVMSAQALA). A compositionally biased stretch (polar residues) spans 397–412 (GLQTKDSSGSGAFTSS). The tract at residues 397-416 (GLQTKDSSGSGAFTSSRGDD) is disordered.

The protein belongs to the porin LamB (TC 1.B.3) family. Homotrimer formed of three 18-stranded antiparallel beta-barrels, containing three independent channels.

Its subcellular location is the cell outer membrane. The enzyme catalyses beta-maltose(in) = beta-maltose(out). Its function is as follows. Involved in the transport of maltose and maltodextrins. The sequence is that of Maltoporin 2 from Klebsiella pneumoniae subsp. pneumoniae (strain ATCC 700721 / MGH 78578).